Reading from the N-terminus, the 217-residue chain is Elongation factor Ts (217 aa).

Residues 80 to 83 (TDFV) form an involved in Mg(2+) ion dislocation from EF-Tu region.

Belongs to the EF-Ts family.

It is found in the cytoplasm. Associates with the EF-Tu.GDP complex and induces the exchange of GDP to GTP. It remains bound to the aminoacyl-tRNA.EF-Tu.GTP complex up to the GTP hydrolysis stage on the ribosome. The polypeptide is Elongation factor Ts (Carboxydothermus hydrogenoformans (strain ATCC BAA-161 / DSM 6008 / Z-2901)).